The following is a 255-amino-acid chain: Protein patched homolog 2 (255 aa).

Residues 1-197 are Extracellular-facing; sequence SLLQGGSAYL…LNDIMKSFSD (197 aa). N-linked (GlcNAc...) asparagine glycosylation is found at Asn-147 and Asn-175. Residues 198-218 form a helical membrane-spanning segment; it reads VSVIRVAGGYLLMLAYACVTM. One can recognise an SSD domain in the interval 199–255; sequence SVIRVAGGYLLMLAYACVTMLRWDCTKSQGAVGLAGVLLVALSVASGLGLCSLLGIS. Residues 219–227 are Cytoplasmic-facing; the sequence is LRWDCTKSQ. The chain crosses the membrane as a helical span at residues 228 to 248; that stretch reads GAVGLAGVLLVALSVASGLGL. The Extracellular segment spans residues 249–255; that stretch reads CSLLGIS.

Belongs to the patched family. In the eye, detected in neural retina, iris, retinal pigment epithelium, but not in lens.

The protein localises to the membrane. Functionally, may act as a receptor for sonic hedgehog (SHH). The sequence is that of Protein patched homolog 2 (PTC2) from Cynops pyrrhogaster (Japanese fire-bellied newt).